The primary structure comprises 96 residues: Nucleoid-associated protein DR_0199 (96 aa).

Belongs to the YbaB/EbfC family. In terms of assembly, homodimer.

It is found in the cytoplasm. It localises to the nucleoid. Its function is as follows. Binds to DNA and alters its conformation. May be involved in regulation of gene expression, nucleoid organization and DNA protection. In Deinococcus radiodurans (strain ATCC 13939 / DSM 20539 / JCM 16871 / CCUG 27074 / LMG 4051 / NBRC 15346 / NCIMB 9279 / VKM B-1422 / R1), this protein is Nucleoid-associated protein DR_0199.